The following is a 316-amino-acid chain: Lipoyl synthase (316 aa).

[4Fe-4S] cluster contacts are provided by C66, C71, C77, C92, C96, C99, and S306. Residues 78–295 (FNRGTATFMI…NLIAFDLGFK (218 aa)) enclose the Radical SAM core domain.

The protein belongs to the radical SAM superfamily. Lipoyl synthase family. The cofactor is [4Fe-4S] cluster.

The protein localises to the cytoplasm. It catalyses the reaction [[Fe-S] cluster scaffold protein carrying a second [4Fe-4S](2+) cluster] + N(6)-octanoyl-L-lysyl-[protein] + 2 oxidized [2Fe-2S]-[ferredoxin] + 2 S-adenosyl-L-methionine + 4 H(+) = [[Fe-S] cluster scaffold protein] + N(6)-[(R)-dihydrolipoyl]-L-lysyl-[protein] + 4 Fe(3+) + 2 hydrogen sulfide + 2 5'-deoxyadenosine + 2 L-methionine + 2 reduced [2Fe-2S]-[ferredoxin]. The protein operates within protein modification; protein lipoylation via endogenous pathway; protein N(6)-(lipoyl)lysine from octanoyl-[acyl-carrier-protein]: step 2/2. In terms of biological role, catalyzes the radical-mediated insertion of two sulfur atoms into the C-6 and C-8 positions of the octanoyl moiety bound to the lipoyl domains of lipoate-dependent enzymes, thereby converting the octanoylated domains into lipoylated derivatives. This chain is Lipoyl synthase, found in Wigglesworthia glossinidia brevipalpis.